We begin with the raw amino-acid sequence, 108 residues long: Nucleoid-associated protein BAV0915 (108 aa).

The protein belongs to the YbaB/EbfC family. In terms of assembly, homodimer.

It is found in the cytoplasm. Its subcellular location is the nucleoid. Functionally, binds to DNA and alters its conformation. May be involved in regulation of gene expression, nucleoid organization and DNA protection. The protein is Nucleoid-associated protein BAV0915 of Bordetella avium (strain 197N).